A 718-amino-acid polypeptide reads, in one-letter code: DNA topoisomerase 1 (718 aa).

Residues 9 to 151 (HEVIICEKPK…KFSTLTREEI (143 aa)) form the Toprim domain. Mg(2+) is bound by residues E15 and D113. Residues 162-571 (DYGQVDSGAA…EAITEVRSIL (410 aa)) enclose the Topo IA-type catalytic domain. Positions 202–207 (SAGRVQ) are interaction with DNA. Catalysis depends on Y320, which acts as the O-(5'-phospho-DNA)-tyrosine intermediate. Over residues 361–371 (HEGKKEDDAHP) the composition is skewed to basic and acidic residues. Residues 361 to 380 (HEGKKEDDAHPAIHPTGLLP) are disordered. C4-type zinc fingers lie at residues 598–626 (CPAC…YPDC) and 680–706 (CPEC…FPKC).

Belongs to the type IA topoisomerase family. Monomer. Mg(2+) is required as a cofactor.

The enzyme catalyses ATP-independent breakage of single-stranded DNA, followed by passage and rejoining.. Releases the supercoiling and torsional tension of DNA, which is introduced during the DNA replication and transcription, by transiently cleaving and rejoining one strand of the DNA duplex. Introduces a single-strand break via transesterification at a target site in duplex DNA. The scissile phosphodiester is attacked by the catalytic tyrosine of the enzyme, resulting in the formation of a DNA-(5'-phosphotyrosyl)-enzyme intermediate and the expulsion of a 3'-OH DNA strand. The free DNA strand then undergoes passage around the unbroken strand, thus removing DNA supercoils. Finally, in the religation step, the DNA 3'-OH attacks the covalent intermediate to expel the active-site tyrosine and restore the DNA phosphodiester backbone. The protein is DNA topoisomerase 1 of Methanothermobacter thermautotrophicus (strain ATCC 29096 / DSM 1053 / JCM 10044 / NBRC 100330 / Delta H) (Methanobacterium thermoautotrophicum).